A 441-amino-acid polypeptide reads, in one-letter code: MAGUK p55 subfamily member 4 (441 aa).

The PDZ domain occupies 1-84; that stretch reads MRTVCLVKNQ…TIMFKVIPVS (84 aa). One can recognise an SH3 domain in the interval 91-161; it reads QTTVYVRAMI…PSNHLLKRKQ (71 aa). Positions 232–421 constitute a Guanylate kinase-like domain; the sequence is HRLIVLVGPS…ARAQLLSAIQ (190 aa). Residues 373–430 adopt a coiled-coil conformation; the sequence is VDMKFKDEDLQEMEELAQKMESQFGQFFDHVIVNDNLQDARAQLLSAIQKAEEELQWV.

The protein belongs to the MAGUK family. Interacts with MPDZ. May interact with GRIA2. Forms a complex with CRB1 and PALS1. Interacts with FASLG. In terms of tissue distribution, highly expressed in brain and detected in lung, and bone (at protein level). Also expressed in intestine and spleen.

It localises to the cytoplasm. In terms of biological role, may play a role in retinal photoreceptors development. The sequence is that of MAGUK p55 subfamily member 4 (Mpp4) from Rattus norvegicus (Rat).